Reading from the N-terminus, the 149-residue chain is UPF0178 protein HEAR0259 (149 aa).

The protein belongs to the UPF0178 family.

The sequence is that of UPF0178 protein HEAR0259 from Herminiimonas arsenicoxydans.